Here is a 146-residue protein sequence, read N- to C-terminus: Fluoride-specific ion channel FluC (146 aa).

Helical transmembrane passes span 8 to 28 (FAIA…TLTV), 47 to 67 (LANL…QALV), 91 to 111 (IGVL…AVFA), and 121 to 141 (MLLG…AAVV). The Na(+) site is built by Gly95 and Thr98.

It belongs to the fluoride channel Fluc/FEX (TC 1.A.43) family.

Its subcellular location is the cell inner membrane. The enzyme catalyses fluoride(in) = fluoride(out). With respect to regulation, na(+) is not transported, but it plays an essential structural role and its presence is essential for fluoride channel function. In terms of biological role, fluoride-specific ion channel. Important for reducing fluoride concentration in the cell, thus reducing its toxicity. This Rhodopirellula baltica (strain DSM 10527 / NCIMB 13988 / SH1) protein is Fluoride-specific ion channel FluC.